A 170-amino-acid chain; its full sequence is Type II secretion system protein H (170 aa).

The propeptide at 1–5 (MRQRG) is leader sequence. Residue F6 is modified to N-methylphenylalanine. A helical membrane pass occupies residues 6 to 29 (FTLLEMMLILLLMGVSAGMVLLAF).

It belongs to the GSP H family. In terms of assembly, type II secretion is composed of four main components: the outer membrane complex, the inner membrane complex, the cytoplasmic secretion ATPase and the periplasm-spanning pseudopilus. Interacts with core component PulG. Post-translationally, cleaved by prepilin peptidase. In terms of processing, methylated by prepilin peptidase at the amino group of the N-terminal phenylalanine once the leader sequence is cleaved by prepilin peptidase.

The protein resides in the cell inner membrane. In terms of biological role, component of the type II secretion system required for the energy-dependent secretion of extracellular factors such as proteases and toxins from the periplasm. Part of the pseudopilus tip complex that is critical for the recognition and binding of secretion substrates. This Klebsiella pneumoniae protein is Type II secretion system protein H (pulH).